A 239-amino-acid polypeptide reads, in one-letter code: Hexuronic acid methyltransferase AglP (239 aa).

The protein belongs to the FkbM methyltransferase family.

It is found in the cytoplasm. The protein operates within cell surface structure biogenesis; S-layer biogenesis. Functionally, involved in the assembly of a N-linked pentasaccharide that decorates the S-layer glycoprotein and flagellins. S-adenosyl-L-methionine-dependent methyltransferase that modifies the hexuronic acid found at position 4 of the pentasaccharide. This Haloferax volcanii (strain ATCC 29605 / DSM 3757 / JCM 8879 / NBRC 14742 / NCIMB 2012 / VKM B-1768 / DS2) (Halobacterium volcanii) protein is Hexuronic acid methyltransferase AglP (aglP).